Reading from the N-terminus, the 483-residue chain is Adenylyltransferase and sulfurtransferase uba4 (483 aa).

ATP-binding positions include Gly-100, Asp-121, Ser-128–Arg-132, Lys-145, and Asp-178–Asn-179. The Zn(2+) site is built by Cys-227 and Cys-230. Residue Cys-244 is the Glycyl thioester intermediate; for adenylyltransferase activity of the active site. Residues Cys-306 and Cys-309 each coordinate Zn(2+). The Rhodanese domain maps to Ile-366 to Pro-481. The Cysteine persulfide intermediate; for sulfurtransferase activity role is filled by Cys-436.

This sequence in the N-terminal section; belongs to the HesA/MoeB/ThiF family. UBA4 subfamily. It depends on Zn(2+) as a cofactor.

The protein resides in the cytoplasm. The protein localises to the cytosol. It carries out the reaction [molybdopterin-synthase sulfur-carrier protein]-C-terminal Gly-Gly + ATP + H(+) = [molybdopterin-synthase sulfur-carrier protein]-C-terminal Gly-Gly-AMP + diphosphate. The enzyme catalyses [molybdopterin-synthase sulfur-carrier protein]-C-terminal Gly-Gly-AMP + S-sulfanyl-L-cysteinyl-[cysteine desulfurase] + AH2 = [molybdopterin-synthase sulfur-carrier protein]-C-terminal-Gly-aminoethanethioate + L-cysteinyl-[cysteine desulfurase] + A + AMP + 2 H(+). It participates in tRNA modification; 5-methoxycarbonylmethyl-2-thiouridine-tRNA biosynthesis. In terms of biological role, plays a central role in 2-thiolation of mcm(5)S(2)U at tRNA wobble positions of cytosolic tRNA(Lys), tRNA(Glu) and tRNA(Gln). Also essential during biosynthesis of the molybdenum cofactor. Acts by mediating the C-terminal thiocarboxylation of sulfur carriers urm1 and mocs2a. Its N-terminus first activates urm1 and mocs2a as acyl-adenylates (-COAMP), then the persulfide sulfur on the catalytic cysteine is transferred to urm1 and mocs2a to form thiocarboxylation (-COSH) of their C-terminus. The reaction probably involves hydrogen sulfide that is generated from the persulfide intermediate and that acts as a nucleophile towards urm1 and mocs2a. Subsequently, a transient disulfide bond is formed. Does not use thiosulfate as sulfur donor; nfs1 probably acting as a sulfur donor for thiocarboxylation reactions. This is Adenylyltransferase and sulfurtransferase uba4 from Neosartorya fischeri (strain ATCC 1020 / DSM 3700 / CBS 544.65 / FGSC A1164 / JCM 1740 / NRRL 181 / WB 181) (Aspergillus fischerianus).